A 1128-amino-acid polypeptide reads, in one-letter code: Phytochrome A (1128 aa).

Residues 1-21 (MSSSRPTQCSSSSSRTRQSSR) are compositionally biased toward low complexity. Residues 1–24 (MSSSRPTQCSSSSSRTRQSSRARI) are disordered. The region spanning 219–404 (SMEVLCNTVV…VFAVHVNKEF (186 aa)) is the GAF domain. C324 is a phytochromobilin binding site. 2 consecutive PAS domains span residues 620–690 (VTSE…LQGK) and 750–834 (VEGD…LAGD). A Histidine kinase domain is found at 904–1124 (YMRHAINNPL…TFILSVELAS (221 aa)).

It belongs to the phytochrome family. Homodimer. Post-translationally, contains one covalently linked phytochromobilin chromophore.

Its function is as follows. Regulatory photoreceptor which exists in two forms that are reversibly interconvertible by light: the Pr form that absorbs maximally in the red region of the spectrum and the Pfr form that absorbs maximally in the far-red region. Photoconversion of Pr to Pfr induces an array of morphogenic responses, whereas reconversion of Pfr to Pr cancels the induction of those responses. Pfr controls the expression of a number of nuclear genes including those encoding the small subunit of ribulose-bisphosphate carboxylase, chlorophyll A/B binding protein, protochlorophyllide reductase, rRNA, etc. It also controls the expression of its own gene(s) in a negative feedback fashion. The protein is Phytochrome A (PHYA) of Oryza sativa subsp. indica (Rice).